An 845-amino-acid polypeptide reads, in one-letter code: Probable inorganic carbon transporter subunit DabA (845 aa).

The tract at residues 1–20 (MPMASGDESMSARSENPVQS) is disordered. C345, D347, H516, and C531 together coordinate Zn(2+).

This sequence belongs to the inorganic carbon transporter (TC 9.A.2) DabA family. In terms of assembly, forms a complex with DabB. Zn(2+) serves as cofactor.

It is found in the cell inner membrane. Part of an energy-coupled inorganic carbon pump. In Azotobacter vinelandii (strain DJ / ATCC BAA-1303), this protein is Probable inorganic carbon transporter subunit DabA.